Consider the following 1120-residue polypeptide: Transcriptional repressor NF-X1 (1120 aa).

The interaction with PABPC1 and PABC4 stretch occupies residues 9 to 26 (GTFKFNTDAAEFIPQEKK). Residues 22–295 (PQEKKNSGLN…LNERPAKSTC (274 aa)) form a disordered region. 3 positions are modified to phosphoserine: Ser-50, Ser-82, and Ser-95. The span at 73–106 (YHPSGSKPKSQQTSFQSSPCNKSPKSHGLQNQPW) shows a compositional bias: polar residues. A compositionally biased stretch (basic residues) spans 111-120 (NEKHHIRVKK). Over residues 124 to 141 (LAEQTSDTAGLESSTRSE) the composition is skewed to polar residues. Phosphoserine is present on residues Ser-129 and Ser-150. Basic and acidic residues-rich tracts occupy residues 142–159 (SGTDLREHSPSESEKEVV), 188–202 (LKCEWSNRTTPKPED), 222–254 (SSRKGVLDGYGARRNEQRRYPQKRPPWEVEGAR), and 282–291 (PKDDLNERPA). Ser-326 is modified (phosphoserine). Residues 358–409 (CMVCCELVRVTAPVWSCQSCYHVFHLNCIKKWARSPASQADGQSGWRCPACQ) form an RING-type; atypical zinc finger. NF-X1-type zinc fingers lie at residues 453–471 (CPHSCNLLCHPGPCPPCPA), 506–525 (CGQHQCAELCHGGQCQPCQI), 567–586 (CGNHTCSQVCHPQPCQQCPR), 632–655 (CGSLDFIHTCEKLCHEGDCGPCSR), 694–713 (CGRHKCNEICCVDKEHKCPL), 721–740 (CGLHRCEEPCHRGNCQTCWQ), 832–854 (CGMHKCQRLCHKGECLVDEPCKQ), and 863–884 (CGHPCMAPCHTSSPCPVTACKA). An R3H domain is found at 994–1062 (LKFVSDVEKE…KRNVVVTAIR (69 aa)). The disordered stretch occupies residues 1081–1109 (QARPPPPIPHHRHQSDKNPGSSNLQKITK). Polar residues predominate over residues 1097–1106 (KNPGSSNLQK).

The protein belongs to the NFX1 family. As to quaternary structure, isoform 1 interacts with PABPC1 and PABPC4. (Microbial infection) Isoform 1 and isoform 3 interact with human papillomavirus (HPV) type-16 E6 oncoprotein. Isoform 3 is polyubiquitinated in the presence of HPV16 E6 protein; which leads to proteasomal degradation. Isoform 1 is not polyubiquitinated.

It localises to the nucleus. Binds to the X-box motif of MHC class II genes and represses their expression. May play an important role in regulating the duration of an inflammatory response by limiting the period in which MHC class II molecules are induced by interferon-gamma. Isoform 3 binds to the X-box motif of TERT promoter and represses its expression. Together with PABPC1 or PABPC4, isoform 1 acts as a coactivator for TERT expression. Mediates E2-dependent ubiquitination. The chain is Transcriptional repressor NF-X1 (NFX1) from Homo sapiens (Human).